A 343-amino-acid polypeptide reads, in one-letter code: Anthranilate phosphoribosyltransferase (343 aa).

5-phospho-alpha-D-ribose 1-diphosphate-binding positions include G81, 84–85 (GD), 91–94 (NLST), 109–117 (KHGNRSVSS), and S121. G81 is an anthranilate binding site. A Mg(2+)-binding site is contributed by S93. N112 is an anthranilate binding site. Position 167 (R167) interacts with anthranilate. Positions 226 and 227 each coordinate Mg(2+).

Belongs to the anthranilate phosphoribosyltransferase family. In terms of assembly, homodimer. It depends on Mg(2+) as a cofactor.

It catalyses the reaction N-(5-phospho-beta-D-ribosyl)anthranilate + diphosphate = 5-phospho-alpha-D-ribose 1-diphosphate + anthranilate. Its pathway is amino-acid biosynthesis; L-tryptophan biosynthesis; L-tryptophan from chorismate: step 2/5. In terms of biological role, catalyzes the transfer of the phosphoribosyl group of 5-phosphorylribose-1-pyrophosphate (PRPP) to anthranilate to yield N-(5'-phosphoribosyl)-anthranilate (PRA). The polypeptide is Anthranilate phosphoribosyltransferase (Cellvibrio japonicus (strain Ueda107) (Pseudomonas fluorescens subsp. cellulosa)).